The sequence spans 437 residues: Transcription factor AP-2-alpha (437 aa).

K10 participates in a covalent cross-link: Glycyl lysine isopeptide (Lys-Gly) (interchain with G-Cter in SUMO); alternate. K10 is covalently cross-linked (Glycyl lysine isopeptide (Lys-Gly) (interchain with G-Cter in SUMO2); alternate). Positions 14 to 107 (CEDRHDGASN…GQRQSQESGL (94 aa)) are disordered. The PPxY motif signature appears at 57–62 (YFPPPY). Composition is skewed to low complexity over residues 65 to 74 (IYPQSQDPYS) and 88 to 101 (QPQP…GQRQ). Residues K177 and K184 each participate in a glycyl lysine isopeptide (Lys-Gly) (interchain with G-Cter in SUMO2) cross-link. S239 carries the post-translational modification Phosphoserine; by PKA. An H-S-H (helix-span-helix), dimerization region spans residues 280–410 (RRKAANVTLL…YLTEALKAMD (131 aa)). Positions 414–427 (LSNNPNSHTDNNAK) are enriched in polar residues. The disordered stretch occupies residues 414-437 (LSNNPNSHTDNNAKSSDKEEKHRK). The span at 428–437 (SSDKEEKHRK) shows a compositional bias: basic and acidic residues.

This sequence belongs to the AP-2 family. Binds DNA as a dimer. Can form homodimers or heterodimers with other AP-2 family members. Interacts with WWOX. Interacts with CITED4. Interacts with UBE2I. Interacts with RALBP1 in a complex also containing EPN1 and NUMB during interphase and mitosis. Interacts with KCTD1; this interaction represses transcription activation. Interacts (via C-terminus) with CITED2 (via C-terminus); the interaction stimulates TFAP2A-transcriptional activation. Interacts (via N-terminus) with EP300 (via N-terminus); the interaction requires CITED2. Interacts with KCTD15; this interaction inhibits TFAP2A transcriptional activation. Sumoylated on Lys-10; which inhibits transcriptional activity.

It is found in the nucleus. Functionally, sequence-specific DNA-binding protein that interacts with inducible viral and cellular enhancer elements to regulate transcription of selected genes. AP-2 factors bind to the consensus sequence 5'-GCCNNNGGC-3' and activate genes involved in a large spectrum of important biological functions including proper eye, face, body wall, limb and neural tube development. They also suppress a number of genes including MCAM/MUC18, C/EBP alpha and MYC. AP-2-alpha is the only AP-2 protein required for early morphogenesis of the lens vesicle. Together with the CITED2 coactivator, stimulates the PITX2 P1 promoter transcription activation. Associates with chromatin to the PITX2 P1 promoter region. In Bos taurus (Bovine), this protein is Transcription factor AP-2-alpha (TFAP2A).